A 193-amino-acid chain; its full sequence is dCTP deaminase, dUMP-forming (193 aa).

DCTP is bound by residues 101–106 (KSSLGR), Asp-119, 127–129 (TLE), Gln-148, Tyr-162, and Gln-174. Glu-129 serves as the catalytic Proton donor/acceptor. The disordered stretch occupies residues 161-184 (PYGSETTGSHYQGQRGPTPSRSYQ).

This sequence belongs to the dCTP deaminase family. As to quaternary structure, homotrimer.

The catalysed reaction is dCTP + 2 H2O = dUMP + NH4(+) + diphosphate. It functions in the pathway pyrimidine metabolism; dUMP biosynthesis; dUMP from dCTP: step 1/1. Its function is as follows. Bifunctional enzyme that catalyzes both the deamination of dCTP to dUTP and the hydrolysis of dUTP to dUMP without releasing the toxic dUTP intermediate. The protein is dCTP deaminase, dUMP-forming of Bifidobacterium animalis subsp. lactis (strain AD011).